Consider the following 248-residue polypeptide: Pulmonary surfactant-associated protein A (248 aa).

The signal sequence occupies residues 1–20; the sequence is MSLGSLAFTLFLTVVAGIKC. Asparagine 21 carries an N-linked (GlcNAc...) asparagine glycan. The Collagen-like domain maps to 28 to 100; the sequence is GSPGIPGTPG…PGERGLPGFP (73 aa). Residues 28-100 form a disordered region; it reads GSPGIPGTPG…PGERGLPGFP (73 aa). A 4-hydroxyproline mark is found at proline 30, proline 33, proline 36, proline 42, proline 54, proline 57, proline 63, proline 67, proline 70, and proline 76. The segment covering 42 to 51 has biased composition (basic and acidic residues); sequence PGRDGRDGIK. Residues 54–65 are compositionally biased toward pro residues; that stretch reads PGPPGPMGPPGG. Over residues 69-82 the composition is skewed to low complexity; sequence LPGRDGLPGAPGAP. Positions 84 to 93 are enriched in basic and acidic residues; the sequence is EHGDKGEPGE. Positions 132–248 constitute a C-type lectin domain; sequence LSVGDKVFST…LQYRLAICEF (117 aa). 2 cysteine pairs are disulfide-bonded: cysteine 155–cysteine 246 and cysteine 224–cysteine 238. The N-linked (GlcNAc...) asparagine glycan is linked to asparagine 207. Residues glutamate 215, arginine 217, asparagine 234, and aspartate 235 each contribute to the Ca(2+) site.

It belongs to the SFTPA family. Oligomeric complex of 6 set of homotrimers.

It is found in the secreted. It localises to the extracellular space. Its subcellular location is the extracellular matrix. The protein localises to the surface film. In terms of biological role, in presence of calcium ions, it binds to surfactant phospholipids and contributes to lower the surface tension at the air-liquid interface in the alveoli of the mammalian lung and is essential for normal respiration. Enhances the expression of MYO18A/SP-R210 on alveolar macrophages. The polypeptide is Pulmonary surfactant-associated protein A (Sftpa1) (Mus musculus (Mouse)).